We begin with the raw amino-acid sequence, 294 residues long: Proline iminopeptidase (294 aa).

The AB hydrolase-1 domain maps to 28-278; the sequence is PLLLLHGGPG…GCGHMPFVQE (251 aa). The active-site Nucleophile is the Ser-106. Residue Asp-245 is part of the active site. His-272 serves as the catalytic Proton donor.

Belongs to the peptidase S33 family. In terms of assembly, homotrimer.

It localises to the cell envelope. It carries out the reaction Release of N-terminal proline from a peptide.. Its activity is regulated as follows. Inhibited by 3,4-DCI, but no significant effect on enzyme activity by pepstatin A, E-64, 1,10-phenanthroline or EDTA. Functionally, releases the N-terminal proline from various substrates. Cleaves Pro-betaNA (L-prolyl-beta-naphthylamide) effectively. The sequence is that of Proline iminopeptidase (pip) from Lactobacillus delbrueckii subsp. lactis.